Consider the following 594-residue polypeptide: Aspartate--tRNA(Asp/Asn) ligase (594 aa).

Glu175 contacts L-aspartate. An aspartate region spans residues 199-202; the sequence is QIYK. Residues Arg221 and His454 each contribute to the L-aspartate site. ATP is bound at residue 221-223; it reads RDE. Glu488 is an ATP binding site. Position 495 (Arg495) interacts with L-aspartate. 540-543 is an ATP binding site; that stretch reads GIDR.

Belongs to the class-II aminoacyl-tRNA synthetase family. Type 1 subfamily. Homodimer.

It is found in the cytoplasm. The catalysed reaction is tRNA(Asx) + L-aspartate + ATP = L-aspartyl-tRNA(Asx) + AMP + diphosphate. In terms of biological role, aspartyl-tRNA synthetase with relaxed tRNA specificity since it is able to aspartylate not only its cognate tRNA(Asp) but also tRNA(Asn). Reaction proceeds in two steps: L-aspartate is first activated by ATP to form Asp-AMP and then transferred to the acceptor end of tRNA(Asp/Asn). The sequence is that of Aspartate--tRNA(Asp/Asn) ligase from Chelativorans sp. (strain BNC1).